Here is a 377-residue protein sequence, read N- to C-terminus: UPF0754 membrane protein BPUM_0927 (377 aa).

Helical transmembrane passes span 1–21 (MNIF…GAAT) and 357–377 (FLGG…VTLF).

It belongs to the UPF0754 family.

It localises to the cell membrane. The sequence is that of UPF0754 membrane protein BPUM_0927 from Bacillus pumilus (strain SAFR-032).